We begin with the raw amino-acid sequence, 421 residues long: Histone-lysine N-methyltransferase SUV39H1 (421 aa).

One can recognise a Chromo domain in the interval 46–104 (FEVEYLWNYKKVQDQELYLVKWKYYPDSESTWEPRHHLKCNNLLKQFHLDLERELLRRA). A Pre-SET domain is found at 189-249 (AGCKCRDCFS…SCPNRVVQKG (61 aa)). Positions 191, 193, 196, 203, 204, 231, 235, 237, and 241 each coordinate Zn(2+). Positions 252–375 (YKFCIFRTSD…TGEELTFDYN (124 aa)) constitute an SET domain. Residues 263 to 265 (RGW), tyrosine 306, and 332 to 333 (NH) contribute to the S-adenosyl-L-methionine site. The Zn(2+) site is built by cysteine 335, cysteine 409, cysteine 411, and cysteine 416. The region spanning 405 to 421 (VRVECKCGVSSCRKYLF) is the Post-SET domain.

This sequence belongs to the class V-like SAM-binding methyltransferase superfamily. Histone-lysine methyltransferase family. Suvar3-9 subfamily.

The protein localises to the nucleus. It localises to the chromosome. The protein resides in the centromere. The catalysed reaction is L-lysyl(9)-[histone H3] + 3 S-adenosyl-L-methionine = N(6),N(6),N(6)-trimethyl-L-lysyl(9)-[histone H3] + 3 S-adenosyl-L-homocysteine + 3 H(+). Histone methyltransferase that specifically trimethylates 'Lys-9' of histone H3 using monomethylated H3 'Lys-9' as substrate. H3 'Lys-9' trimethylation represents a specific tag for epigenetic transcriptional repression by recruiting HP1 (CBX1, CBX3 and/or CBX5) proteins to methylated histones. Mainly functions in heterochromatin regions, thereby playing a central role in the establishment of constitutive heterochromatin at pericentric and telomere regions. H3 'Lys-9' trimethylation is also required to direct DNA methylation at pericentric repeats. SUV39H1 is targeted to histone H3 via its interaction with RB1 and is involved in many processes. In Xenopus laevis (African clawed frog), this protein is Histone-lysine N-methyltransferase SUV39H1 (suv39h1).